We begin with the raw amino-acid sequence, 638 residues long: MLEQIRGPADLQHLSQSALSELAGEIRQFLIHKVAATGGHLGPNLGVVELTLALHRVFDSPHDPLIFDTGHQAYVHKMLTGRSHEFDSLRKKDGLSGYPSRSESEHDWVESSHASAALSYADGLAKAFELTGHRNRHVVAVVGDGALTGGMCWEALNNIAAARRPVVIVVNDNGRSYAPTIGGFADHLAALRLQPGYERVLEEGRKAVRGLPVIGEFCYQCMHSVKAGIKDALSPQVMFTDLGLKYVGPIDGHDEHAVESALRHARGFNAPVIVHVVTRKGMGYAPAENDEAEQMHACGVIDVATGRATMVAAPGWTSSFSEALIDYGAKRRDIVAITAAMPGPTGLSAFRDRFPDRFFDVGIAEQHAMTSAAGLAMGGLHPVVAIYSTFLNRAFDQLMMDVALHKLPVTLVLDRSGVTGPDGASHNGMWDLSVLGIVPGMRVAAPRDGARLREELGEALDVNDAPTAIRFPKGDVGEDIPAVRRHRGVDVLAEPADGLSDDVLLVAVGPFASMALTVAERLRKQGIGVTVVDPRWVLPVPEVLTEFAAAHKLVVTVEDNGLHGGIGSSVSAALRHAEVDVPCRDVGLPQQFFDHASRGEVLADVGVTDRNISRQITGWVAALGATPADADEVSERLD.

Thiamine diphosphate is bound by residues His-71 and 112-114 (SHA). Asp-144 provides a ligand contact to Mg(2+). Residues 145–146 (GA), Asn-173, Tyr-284, and Glu-365 contribute to the thiamine diphosphate site. Residue Asn-173 coordinates Mg(2+).

The protein belongs to the transketolase family. DXPS subfamily. In terms of assembly, homodimer. The cofactor is Mg(2+). Thiamine diphosphate serves as cofactor.

It catalyses the reaction D-glyceraldehyde 3-phosphate + pyruvate + H(+) = 1-deoxy-D-xylulose 5-phosphate + CO2. It participates in metabolic intermediate biosynthesis; 1-deoxy-D-xylulose 5-phosphate biosynthesis; 1-deoxy-D-xylulose 5-phosphate from D-glyceraldehyde 3-phosphate and pyruvate: step 1/1. Catalyzes the acyloin condensation reaction between C atoms 2 and 3 of pyruvate and glyceraldehyde 3-phosphate to yield 1-deoxy-D-xylulose-5-phosphate (DXP). This is 1-deoxy-D-xylulose-5-phosphate synthase from Mycobacterium sp. (strain JLS).